Here is a 909-residue protein sequence, read N- to C-terminus: Short transient receptor potential channel 3 (909 aa).

Residues 1–92 (MSTKVKKCRE…VRGPAFMFGA (92 aa)) are disordered. The Cytoplasmic segment spans residues 1-447 (MSTKVKKCRE…KILRSPFMKF (447 aa)). A compositionally biased stretch (acidic residues) spans 19-28 (PEEEDGEAEG). Residues 47-57 (PPCPRAPPSPG) show a composition bias toward pro residues. Residues 58–67 (PDASSEGSPS) show a composition bias toward low complexity. ANK repeat units lie at residues 99–128 (AEEE…TLNV), 134–163 (MGQN…LARI), 165–191 (DALL…FAAS), and 220–249 (PDIT…RIER). Glutamate 146 provides a ligand contact to Ca(2+). Residues 448–465 (VAHAASFIIFLGLLVFNA) form a helical membrane-spanning segment. Residues 466-496 (SDRFEGITTLPNITVIDYPKQIFRVKTTQFT) lie on the Extracellular side of the membrane. A glycan (N-linked (GlcNAc...) asparagine) is linked at asparagine 477. A helical transmembrane segment spans residues 497 to 515 (WTEMLIMVWVLGMMWSECK). 3 residues coordinate Ca(2+): glutamate 513, glutamate 516, and asparagine 531. Over 516 to 528 (ELWLEGPREYIVQ) the chain is Cytoplasmic. A helical membrane pass occupies residues 529–550 (LWNVLDFGMLSIFIAAFTARFL). Residues 551–594 (AFLQATKAQQYVDSHVQESDLSEVTLPPEVQYFTYARDKWLPSD) lie on the Extracellular side of the membrane. A helical transmembrane segment spans residues 595–618 (PQIISEGLYAIAVVLSFSRIAYIL). The Cytoplasmic segment spans residues 619–637 (PANESFGPLQISLGRTVKD). An ANK 5 repeat occupies 622–651 (ESFGPLQISLGRTVKDIFKFMVLFIMVFLA). A helical membrane pass occupies residues 638 to 661 (IFKFMVLFIMVFLAFMIGMFILYS). Over 662 to 701 (YYLGAKVNPAFTTVEESFKTLFWSIFGLSEVTSVVLKYDH) the chain is Extracellular. Residues 702-727 (KFIENIGYVLYGIYNVTMVVVLLNML) traverse the membrane as a helical segment. Over 728–909 (IAMINSSYQE…KLNPSALRCE (182 aa)) the chain is Cytoplasmic. 4 residues coordinate Ca(2+): glutamate 859, glutamate 862, glutamate 864, and aspartate 871.

It belongs to the transient receptor (TC 1.A.4) family. STrpC subfamily. TRPC3 sub-subfamily. Homotetramer. Interacts with ITPR1, ITPR3, MX1 and RNF24. Interacts with JPH2; the interaction is involved in maintaining Ca(2+) homeostasis in skeletal muscle and is mediated by JPH2 'Ser-165' phosphorylation.

The protein resides in the cell membrane. The catalysed reaction is Ca(2+)(in) = Ca(2+)(out). Its activity is regulated as follows. Activated by diacylglycerol (DAG) in a membrane-delimited fashion, independently of protein kinase C. Activated by inositol 1,4,5-triphosphate receptors (ITPR) with bound IP3. May be activated by internal calcium store depletion. Inhibited by intracellular Ca(2+). In terms of biological role, forms a receptor-activated non-selective calcium permeant cation channel. May be operated by a phosphatidylinositol second messenger system activated by receptor tyrosine kinases or G-protein coupled receptors. This chain is Short transient receptor potential channel 3 (Trpc3), found in Rattus norvegicus (Rat).